The sequence spans 215 residues: 7-cyano-7-deazaguanine synthase (215 aa).

Position 8–18 (8–18 (LSAGLDSTVSL)) interacts with ATP. Positions 191, 199, 202, and 205 each coordinate Zn(2+).

The protein belongs to the QueC family. In terms of assembly, homodimer. Requires Zn(2+) as cofactor.

It carries out the reaction 7-carboxy-7-deazaguanine + NH4(+) + ATP = 7-cyano-7-deazaguanine + ADP + phosphate + H2O + H(+). The protein operates within purine metabolism; 7-cyano-7-deazaguanine biosynthesis. Functionally, catalyzes the ATP-dependent conversion of 7-carboxy-7-deazaguanine (CDG) to 7-cyano-7-deazaguanine (preQ(0)). The protein is 7-cyano-7-deazaguanine synthase of Carboxydothermus hydrogenoformans (strain ATCC BAA-161 / DSM 6008 / Z-2901).